We begin with the raw amino-acid sequence, 255 residues long: Ribonuclease PH (255 aa).

Phosphate is bound by residues R86 and 124–126 (GTR).

The protein belongs to the RNase PH family. Homohexameric ring arranged as a trimer of dimers.

The catalysed reaction is tRNA(n+1) + phosphate = tRNA(n) + a ribonucleoside 5'-diphosphate. Its function is as follows. Phosphorolytic 3'-5' exoribonuclease that plays an important role in tRNA 3'-end maturation. Removes nucleotide residues following the 3'-CCA terminus of tRNAs; can also add nucleotides to the ends of RNA molecules by using nucleoside diphosphates as substrates, but this may not be physiologically important. Probably plays a role in initiation of 16S rRNA degradation (leading to ribosome degradation) during starvation. The chain is Ribonuclease PH from Hydrogenobaculum sp. (strain Y04AAS1).